Here is a 288-residue protein sequence, read N- to C-terminus: NAD(P)H-hydrate epimerase (288 aa).

The N-terminal 59 residues, 1–59, are a transit peptide targeting the mitochondrion; it reads MSGLRALLGLGLPVAGSRLPRVRVQAGACRARPTWWGPQRLISGGRGDVEGMASSAVKY. One can recognise a YjeF N-terminal domain in the interval 65–275; it reads AQAVDQELFN…ALEKKYQLNL (211 aa). Position 119 to 123 (119 to 123) interacts with (6S)-NADPHX; that stretch reads NNGGD. N120 provides a ligand contact to K(+). N6-succinyllysine is present on K144. D185 serves as a coordination point for K(+). (6S)-NADPHX is bound by residues 189–195 and D218; that span reads GFSFKGE. Residue S221 coordinates K(+).

The protein belongs to the NnrE/AIBP family. As to quaternary structure, homodimer. Interacts with APOA1 and APOA2. Requires K(+) as cofactor. Post-translationally, undergoes physiological phosphorylation during sperm capacitation, downstream to PKA activation.

The protein localises to the mitochondrion. The protein resides in the secreted. The enzyme catalyses (6R)-NADHX = (6S)-NADHX. It carries out the reaction (6R)-NADPHX = (6S)-NADPHX. Its function is as follows. Catalyzes the epimerization of the S- and R-forms of NAD(P)HX, a damaged form of NAD(P)H that is a result of enzymatic or heat-dependent hydration. This is a prerequisite for the S-specific NAD(P)H-hydrate dehydratase to allow the repair of both epimers of NAD(P)HX. Accelerates cholesterol efflux from endothelial cells to high-density lipoprotein (HDL) and thereby regulates angiogenesis. The protein is NAD(P)H-hydrate epimerase of Sus scrofa (Pig).